The primary structure comprises 232 residues: Phosphatidylserine decarboxylase proenzyme (232 aa).

Residue Ser-190 is the Schiff-base intermediate with substrate; via pyruvic acid of the active site. A Pyruvic acid (Ser); by autocatalysis modification is found at Ser-190.

The protein belongs to the phosphatidylserine decarboxylase family. PSD-A subfamily. In terms of assembly, heterodimer of a large membrane-associated beta subunit and a small pyruvoyl-containing alpha subunit. The cofactor is pyruvate. In terms of processing, is synthesized initially as an inactive proenzyme. Formation of the active enzyme involves a self-maturation process in which the active site pyruvoyl group is generated from an internal serine residue via an autocatalytic post-translational modification. Two non-identical subunits are generated from the proenzyme in this reaction, and the pyruvate is formed at the N-terminus of the alpha chain, which is derived from the carboxyl end of the proenzyme. The post-translation cleavage follows an unusual pathway, termed non-hydrolytic serinolysis, in which the side chain hydroxyl group of the serine supplies its oxygen atom to form the C-terminus of the beta chain, while the remainder of the serine residue undergoes an oxidative deamination to produce ammonia and the pyruvoyl prosthetic group on the alpha chain.

The protein localises to the cell membrane. It catalyses the reaction a 1,2-diacyl-sn-glycero-3-phospho-L-serine + H(+) = a 1,2-diacyl-sn-glycero-3-phosphoethanolamine + CO2. It functions in the pathway phospholipid metabolism; phosphatidylethanolamine biosynthesis; phosphatidylethanolamine from CDP-diacylglycerol: step 2/2. Its function is as follows. Catalyzes the formation of phosphatidylethanolamine (PtdEtn) from phosphatidylserine (PtdSer). The polypeptide is Phosphatidylserine decarboxylase proenzyme (Rhodopseudomonas palustris (strain BisB5)).